We begin with the raw amino-acid sequence, 87 residues long: MSERNQRKVYVGRVVSDKMDKTITVLVETYKKHPLYGKRVKYSKKYKAHDEHNIAKVGDIVKIMETRPLSATKRFRLVEVVEKAVIL.

It belongs to the universal ribosomal protein uS17 family. As to quaternary structure, part of the 30S ribosomal subunit.

Functionally, one of the primary rRNA binding proteins, it binds specifically to the 5'-end of 16S ribosomal RNA. This is Small ribosomal subunit protein uS17 from Geobacillus thermodenitrificans (strain NG80-2).